The following is a 163-amino-acid chain: Probable ribosome biogenesis protein RLP24 (163 aa).

This sequence belongs to the eukaryotic ribosomal protein eL24 family. Associated with nucleolar and cytoplasmic pre-60S particles. At the end of biogenesis it dissociates from cytoplasmic pre-60S particles and is likely to be exchanged for its ribosomal homolog, RPL24.

The protein resides in the nucleus. The protein localises to the nucleolus. Functionally, involved in the biogenesis of the 60S ribosomal subunit. Ensures the docking of GTPBP4/NOG1 to pre-60S particles. This is Probable ribosome biogenesis protein RLP24 (RSL24D1) from Bos taurus (Bovine).